The chain runs to 274 residues: Bis(5'-nucleosyl)-tetraphosphatase, symmetrical (274 aa).

It belongs to the Ap4A hydrolase family.

It catalyses the reaction P(1),P(4)-bis(5'-adenosyl) tetraphosphate + H2O = 2 ADP + 2 H(+). Functionally, hydrolyzes diadenosine 5',5'''-P1,P4-tetraphosphate to yield ADP. The polypeptide is Bis(5'-nucleosyl)-tetraphosphatase, symmetrical (Shewanella sediminis (strain HAW-EB3)).